Here is a 338-residue protein sequence, read N- to C-terminus: Probable arabinan endo-1,5-alpha-L-arabinosidase A (338 aa).

Positions 1–20 are cleaved as a signal peptide; sequence MRASFVVTAPLLAAAVHGYA. D33 acts as the Proton acceptor in catalysis. E217 functions as the Proton donor in the catalytic mechanism.

It belongs to the glycosyl hydrolase 43 family.

The protein resides in the secreted. The enzyme catalyses Endohydrolysis of (1-&gt;5)-alpha-arabinofuranosidic linkages in (1-&gt;5)-arabinans.. The protein operates within glycan metabolism; L-arabinan degradation. Its function is as follows. Endo-1,5-alpha-L-arabinanase involved in degradation of pectin. Its preferred substrate is linear 1,5-alpha-L-arabinan. This Aspergillus terreus (strain NIH 2624 / FGSC A1156) protein is Probable arabinan endo-1,5-alpha-L-arabinosidase A (abnA).